Reading from the N-terminus, the 694-residue chain is Polyribonucleotide nucleotidyltransferase (694 aa).

Residues aspartate 485 and aspartate 491 each contribute to the Mg(2+) site. In terms of domain architecture, KH spans 552–611; it reads PRIETMQIKPNKIATVIGPGGKQIRQIIEEAGVQIDINDSGLVSISASSPQAIEKAKSII. Positions 621 to 689 constitute an S1 motif domain; the sequence is GKIYEGRVTS…EKGQYKLSHK (69 aa).

This sequence belongs to the polyribonucleotide nucleotidyltransferase family. It depends on Mg(2+) as a cofactor.

The protein resides in the cytoplasm. It catalyses the reaction RNA(n+1) + phosphate = RNA(n) + a ribonucleoside 5'-diphosphate. Functionally, involved in mRNA degradation. Catalyzes the phosphorolysis of single-stranded polyribonucleotides processively in the 3'- to 5'-direction. This chain is Polyribonucleotide nucleotidyltransferase, found in Chlamydia abortus (strain DSM 27085 / S26/3) (Chlamydophila abortus).